The following is a 415-amino-acid chain: Sucrose permease (415 aa).

Residues 1-16 (MALNIPFRNAYYRFAS) lie on the Cytoplasmic side of the membrane. A helical membrane pass occupies residues 17 to 37 (SYSFLFFISWSLWWSLYAIWL). The Periplasmic segment spans residues 38 to 48 (KGHLGLTGTEL). Residues 49–69 (GTLYSVNQFTSILFMMFYGIV) form a helical membrane-spanning segment. Topologically, residues 70–77 (QDKLGLKK) are cytoplasmic. A helical transmembrane segment spans residues 78–98 (PLIWCMSFILVLTGPFMIYVY). The Periplasmic segment spans residues 99 to 107 (EPLLQSNFS). Residues 108 to 128 (VGLILGALFFGLGYLAGCGLL) form a helical membrane-spanning segment. The Cytoplasmic portion of the chain corresponds to 129–147 (DSFTEKMARNFHFEYGTAR). The chain crosses the membrane as a helical span at residues 148–167 (AWGSFGYAIGAFFAGIFFSI). Residues 168 to 170 (SPH) are Periplasmic-facing. The helical transmembrane segment at 171–190 (INFWLVSLFGAVFMMINMRF) threads the bilayer. Topologically, residues 191–220 (KDKDHQCIAADAGGVKKEDFIAVFKDRNFW) are cytoplasmic. Residues 221–241 (VFVIFIVGTWSFYNIFDQQLF) form a helical membrane-spanning segment. At 242 to 260 (PVFYAGLFESHDVGTRLYG) the chain is on the periplasmic side. A helical membrane pass occupies residues 261–281 (YLNSFQVVLEALCMAIIPFFV). Over 282–287 (NRVGPK) the chain is Cytoplasmic. The helical transmembrane segment at 288–308 (NALLIGVVIMALRILSCALFV) threads the bilayer. Residues 309-311 (NPW) are Periplasmic-facing. A helical transmembrane segment spans residues 312–332 (IISLVKLLHAIEVPLCVISVF). Residues 333–342 (KYSVANFDKR) lie on the Cytoplasmic side of the membrane. A helical membrane pass occupies residues 343–363 (LSSTIFLIGFQIASSLGIVLL). Topologically, residues 364–377 (STPTGILFDHAGYQ) are periplasmic. The helical transmembrane segment at 378-398 (TVFFAISGIVCLMLLFGIFFL) threads the bilayer. At 399-415 (SKKREQIVMETPVPSAI) the chain is on the cytoplasmic side.

The protein belongs to the major facilitator superfamily. Oligosaccharide:H(+) symporter (OHS) (TC 2.A.1.5) family.

The protein localises to the cell inner membrane. It functions in the pathway glycan biosynthesis; sucrose metabolism. Functionally, responsible for transport of sucrose into the cell, with the concomitant import of a proton (symport system). Can also transport maltose, fructose or lactulose, but not glucose, lactose or melibiose. The substrate specificity is directed toward the fructofuranosyl moiety of the substrate. The protein is Sucrose permease of Escherichia coli.